The primary structure comprises 450 residues: MHAISSAAPAPSVRLPFYRQLYFQVVFAIIIGVLLGHFQPEYGAAMKPFGDAFIKLIKMIIAPVIFLTIVTGIASMSHLSAVGRVFGKAMAYFLTFSTLALVVGLVVANVMQPGTGMHINVAELDQTAVKGYVSKSHEMTLTGFALDIIPKTLISPFVGDNILQVLLVAVLFGVSLAMVGDAGKPILDFLDGLTKPVFKLVNIVMKAAPIGAFGAMAFTIGKFGLGSLVNLAELVLTFYITSAVFVLVVLGAVARACGFSVLKLIRYLKAELLLVLGTSSSESALPSLMEKMEKAGCAKSVVGLVVPTGYSFNLDGTNIYMTLAALFIAQATDTHLTLGHQIALLLVAMLSSKGAAGVTGAGFITLAATLAVVPEVPVAGMALILGVDRFMSECRSLTNFIGNAVATVVVSRWENALDADRLHRVLDGEAEFLPEPERAVEPVVLARHRA.

Helical transmembrane passes span 25-45 (VVFA…YGAA), 56-76 (LIKM…IASM), 90-110 (MAYF…VANV), 162-182 (ILQV…VGDA), 200-220 (LVNI…AFTI), 234-254 (LVLT…GAVA), 319-339 (IYMT…LTLG), and 367-387 (AATL…ILGV).

The protein belongs to the dicarboxylate/amino acid:cation symporter (DAACS) (TC 2.A.23) family.

It localises to the cell inner membrane. Responsible for the transport of dicarboxylates such as succinate, fumarate, and malate from the periplasm across the membrane. The protein is C4-dicarboxylate transport protein of Acidovorax sp. (strain JS42).